The chain runs to 155 residues: Putative pre-16S rRNA nuclease (155 aa).

The protein belongs to the YqgF nuclease family.

The protein localises to the cytoplasm. Could be a nuclease involved in processing of the 5'-end of pre-16S rRNA. This chain is Putative pre-16S rRNA nuclease, found in Xanthomonas campestris pv. campestris (strain B100).